Consider the following 207-residue polypeptide: Histone H1 (207 aa).

Over residues 1-15 the composition is skewed to low complexity; the sequence is MAEVAPAPAAAAPAK. Disordered regions lie at residues 1–28 and 105–207; these read MAEVAPAPAAAAPAKAPKKKAAAKPKKA and EAKK…PKKK. N-acetylalanine is present on alanine 2. Over residues 16 to 27 the composition is skewed to basic residues; that stretch reads APKKKAAAKPKK. In terms of domain architecture, H15 spans 28–101; that stretch reads AGPSVGELIV…GASGSFKLNK (74 aa). 2 stretches are compositionally biased toward basic residues: residues 117–168 and 175–207; these read KAKK…KVKK and KAAKSPKKATKAAKPKAAKPKAAKAKKAAPKKK.

This sequence belongs to the histone H1/H5 family. As to expression, oncorhyncin II is expressed in skin.

It localises to the nucleus. Its subcellular location is the chromosome. The protein localises to the secreted. Functionally, histones H1 are necessary for the condensation of nucleosome chains into higher-order structures. Oncorhyncin II has antibacterial activity against Gram-positive and Gram-negative bacteria at submicromolar concentrations. Potentially important role in mucosal defense. In Oncorhynchus mykiss (Rainbow trout), this protein is Histone H1.